A 294-amino-acid polypeptide reads, in one-letter code: RNA exonuclease 4 (294 aa).

Positions 1–13 are enriched in polar residues; that stretch reads MVLSSNWLSLQKS. The segment at 1–56 is disordered; the sequence is MVLSSNWLSLQKSTDSDSVNKNKGGKKTKSNSKKRTVSVKKDKQYVDKKKKNGTGS. The span at 23–38 shows a compositional bias: basic residues; it reads KGGKKTKSNSKKRTVS. An Exonuclease domain is found at 119–271; that stretch reads YVSMDCEFVG…EDARATMLLY (153 aa).

It belongs to the REXO4 family.

Its subcellular location is the nucleus. Exoribonuclease involved in ribosome biosynthesis. Involved in the processing of ITS1, the internal transcribed spacer localized between the 18S and 5.8S rRNAs. The sequence is that of RNA exonuclease 4 (REX4) from Kluyveromyces lactis (strain ATCC 8585 / CBS 2359 / DSM 70799 / NBRC 1267 / NRRL Y-1140 / WM37) (Yeast).